The following is a 206-amino-acid chain: Large ribosomal subunit protein uL4 (206 aa).

Positions 45–76 are disordered; the sequence is RQGNQSAKTRAEVSGGGKKPWRQKGTGRARQG.

The protein belongs to the universal ribosomal protein uL4 family. As to quaternary structure, part of the 50S ribosomal subunit.

Functionally, one of the primary rRNA binding proteins, this protein initially binds near the 5'-end of the 23S rRNA. It is important during the early stages of 50S assembly. It makes multiple contacts with different domains of the 23S rRNA in the assembled 50S subunit and ribosome. In terms of biological role, forms part of the polypeptide exit tunnel. The protein is Large ribosomal subunit protein uL4 of Clostridium novyi (strain NT).